The chain runs to 490 residues: GTPase Der (490 aa).

EngA-type G domains are found at residues 3 to 166 and 196 to 369; these read PVIA…PRDE and IKIA…KSAV. GTP-binding positions include 9–16, 56–60, 118–121, 202–209, 249–253, and 314–317; these read GRPNVGKS, DTGGI, NKID, DTAGV, and NKWD. Positions 370-454 constitute a KH-like domain; that stretch reads TRWPTSRLTQ…PIRIEFKGGE (85 aa). The disordered stretch occupies residues 452 to 490; the sequence is GGENPYEGNKNTLTDRQVNKKRRMMSHHKKADKKRRDKR. Basic residues predominate over residues 470–490; that stretch reads NKKRRMMSHHKKADKKRRDKR.

Belongs to the TRAFAC class TrmE-Era-EngA-EngB-Septin-like GTPase superfamily. EngA (Der) GTPase family. Associates with the 50S ribosomal subunit.

Its function is as follows. GTPase that plays an essential role in the late steps of ribosome biogenesis. This chain is GTPase Der, found in Pseudomonas syringae pv. syringae (strain B728a).